Here is a 20-residue protein sequence, read N- to C-terminus: Unknown protein NF019 from 2D-PAGE (20 aa).

The chain is Unknown protein NF019 from 2D-PAGE from Naegleria fowleri (Brain eating amoeba).